The chain runs to 133 residues: Cytochrome c-554 (133 aa).

Position 1 is a pyrrolidone carboxylic acid (glutamine 1). Residues methionine 17, cysteine 122, cysteine 125, and histidine 126 each contribute to the heme c site.

Binds 1 heme c group covalently per subunit.

It is found in the periplasm. Functionally, monoheme c-type cytochrome, that is particularly expressed when cells generate energy via aerobic respiration. The chain is Cytochrome c-554 (cycF) from Cereibacter sphaeroides (Rhodobacter sphaeroides).